We begin with the raw amino-acid sequence, 745 residues long: Photosystem I P700 chlorophyll a apoprotein A2 (745 aa).

The next 8 helical transmembrane spans lie at 49-72 (LFAT…FHIA), 138-161 (LYAG…LHLQ), 178-202 (LNHH…HVAI), 276-294 (MAHH…GHMY), 338-361 (LHFQ…QHMY), 377-403 (AALY…IFLV), 425-447 (AIIS…LYVH), and 528-546 (FLVH…LILV). Positions 570 and 579 each coordinate [4Fe-4S] cluster. Helical transmembrane passes span 586 to 607 (AFYL…YWHW) and 654 to 676 (LAVW…MFLI). Positions 665, 673, and 681 each coordinate chlorophyll a. Phylloquinone is bound at residue Trp-682. The helical transmembrane segment at 718 to 738 (LVGLAHFTVGYVLTYAAFVIA) threads the bilayer.

The protein belongs to the PsaA/PsaB family. In terms of assembly, the PsaA/B heterodimer binds the P700 chlorophyll special pair and subsequent electron acceptors. PSI consists of a core antenna complex that captures photons, and an electron transfer chain that converts photonic excitation into a charge separation. The cyanobacterial PSI reaction center is composed of one copy each of PsaA,B,C,D,E,F,I,J,K,L,M and X, and forms trimeric complexes. Requires PSI electron transfer chain: 5 chlorophyll a, 1 chlorophyll a', 2 phylloquinones and 3 4Fe-4S clusters. PSI core antenna: 90 chlorophyll a, 22 carotenoids, 3 phospholipids and 1 galactolipid. P700 is a chlorophyll a/chlorophyll a' dimer, A0 is one or more chlorophyll a, A1 is one or both phylloquinones and FX is a shared 4Fe-4S iron-sulfur center. as cofactor.

Its subcellular location is the cellular thylakoid membrane. The enzyme catalyses reduced [plastocyanin] + hnu + oxidized [2Fe-2S]-[ferredoxin] = oxidized [plastocyanin] + reduced [2Fe-2S]-[ferredoxin]. PsaA and PsaB bind P700, the primary electron donor of photosystem I (PSI), as well as the electron acceptors A0, A1 and FX. PSI is a plastocyanin/cytochrome c6-ferredoxin oxidoreductase, converting photonic excitation into a charge separation, which transfers an electron from the donor P700 chlorophyll pair to the spectroscopically characterized acceptors A0, A1, FX, FA and FB in turn. Oxidized P700 is reduced on the lumenal side of the thylakoid membrane by plastocyanin or cytochrome c6. The chain is Photosystem I P700 chlorophyll a apoprotein A2 from Synechococcus sp. (strain JA-3-3Ab) (Cyanobacteria bacterium Yellowstone A-Prime).